We begin with the raw amino-acid sequence, 64 residues long: Disintegrin (64 aa).

Residues Asn-1–His-64 enclose the Disintegrin domain. Intrachain disulfides connect Cys-6-Cys-29, Cys-20-Cys-26, Cys-25-Cys-50, and Cys-38-Cys-57. Positions Met-42 to Asp-44 match the Cell attachment site; atypical (MLD) motif.

Belongs to the disintegrin family. Dimeric disintegrin subfamily. Heterodimer; disulfide-linked. As to expression, expressed by the venom gland.

Its subcellular location is the secreted. Inhibits adhesion of cells expressing alpha-4/beta-1 (ITGA4/ITGB1) and alpha-4/beta-7 (ITGA4/ITGB7) integrins to the natural ligands vascular cell adhesion molecule 1 (VCAM-1) and mucosal addressin cell adhesion molecule 1 (MADCAM-1). The chain is Disintegrin from Echis carinatus (Saw-scaled viper).